A 916-amino-acid chain; its full sequence is Translation initiation factor IF-2 (916 aa).

The disordered stretch occupies residues 1–325; it reads MTDSNDDKTL…QEKFRRSQVQ (325 aa). Low complexity predominate over residues 60–91; the sequence is ITPATPAAPVRAAEPAPAPAQARPQQSTPAPR. Positions 97-108 are enriched in polar residues; that stretch reads GQANQRPQQSYQ. Positions 125-182 are enriched in basic and acidic residues; it reads SPEEMDARRRALAESQARDAQDAIRRAEEEKRRAAEEAVRKAAEAEEAARRAVEEAAR. Low complexity-rich tracts occupy residues 183–209 and 229–243; these read QAEA…AEAR and DGAA…PAAV. One can recognise a tr-type G domain in the interval 414–581; the sequence is SRPPVVTIMG…AVLLQAEILD (168 aa). The G1 stretch occupies residues 423–430; the sequence is GHVDHGKT. A GTP-binding site is contributed by 423–430; sequence GHVDHGKT. Residues 448-452 form a G2 region; it reads GITQH. A G3 region spans residues 469 to 472; it reads DTPG. Residues 469–473 and 523–526 contribute to the GTP site; these read DTPGH and NKID. Residues 523-526 form a G4 region; that stretch reads NKID. The segment at 559–561 is G5; that stretch reads SAK.

It belongs to the TRAFAC class translation factor GTPase superfamily. Classic translation factor GTPase family. IF-2 subfamily.

The protein resides in the cytoplasm. One of the essential components for the initiation of protein synthesis. Protects formylmethionyl-tRNA from spontaneous hydrolysis and promotes its binding to the 30S ribosomal subunits. Also involved in the hydrolysis of GTP during the formation of the 70S ribosomal complex. The protein is Translation initiation factor IF-2 of Rhizobium etli (strain ATCC 51251 / DSM 11541 / JCM 21823 / NBRC 15573 / CFN 42).